A 376-amino-acid chain; its full sequence is Crh-like protein 4 (376 aa).

Residues 1-21 form the signal peptide; it reads MFPKIFLTAATALLSAKSTFA. In terms of domain architecture, GH16 spans 22–229; that stretch reads QTYSSCNPLF…WARGPTDYSN (208 aa). C27 and C35 form a disulfide bridge. E119 acts as the Nucleophile in catalysis. The active-site Proton donor is the E123. Positions 123, 202, 206, and 217 each coordinate chitin. S346 is lipidated: GPI-anchor amidated serine. Residues 347–376 constitute a propeptide, removed in mature form; the sequence is ASPINISRINPLLLCGPFTFFFFAAIRRWP. N351 carries an N-linked (GlcNAc...) asparagine glycan.

The protein belongs to the glycosyl hydrolase 16 family. CRH1 subfamily.

The protein localises to the cell membrane. The catalysed reaction is Random endo-hydrolysis of N-acetyl-beta-D-glucosaminide (1-&gt;4)-beta-linkages in chitin and chitodextrins.. In terms of biological role, dual chitinase/transglycosylase that plays a role in cell wall architecture. Chitinase and transglycosylase activities are coupled. Required for the polysaccharide cross-linking at the septa and the cell wall. More specifically, transfers chitin to 1,6-beta-glucan in the cell wall. This Botryotinia fuckeliana (strain B05.10) (Noble rot fungus) protein is Crh-like protein 4.